A 486-amino-acid polypeptide reads, in one-letter code: MISNGSKSGKNLGAIALAGMVISSMIGGGIFSLPQNMAASAGVGAIILAWILTGVGMFFIANTFKILSLVRPDLTTGIYMYSREGFGPYIGFTIGWGYWLCQIFGNVGYAVMTMDALNYFFPPYFQGGNTLPAILGGSILIWVFNFIVLKGIRQASFINIIGTVGKLVPLIVFIIITAFLFKLAIFKTDFWGDTVTKTQPLLGSMTSQLKSTMLVTLWAFIGIEGAVVMSARAKSPSAVGKATILGFTGCLTVYILLSILPFGSLFQHQLAGIANPSTAGVLDILVGKWGEILMNVGLLIAVLSSWLSWTMIVAEIPYSAAKNGTFPEIFAIENAHRSPKVSLYVTSALMQIAMLLVYFSTDAWNTMLSITGVMVLPAYFASAAFLVKFSKNKKYPNKGPIKAFTAKITGLLGAVYSIWLIYAGGLKYLLMAIILLALGIPFYIDAGKKGRNAKTFFAKKEVTEITIIAFLALLAIFLFSTEKIRL.

Transmembrane regions (helical) follow at residues 12 to 32, 41 to 61, 85 to 105, 132 to 152, 160 to 180, 211 to 231, 242 to 262, 296 to 316, 341 to 361, 367 to 387, 418 to 438, and 461 to 481; these read LGAI…GIFS, AGVG…FFIA, GFGP…QIFG, PAIL…LKGI, IIGT…TAFL, STML…VMSA, ATIL…ILPF, VGLL…VAEI, VSLY…YFST, MLSI…AFLV, IWLI…LLAL, and EVTE…LFST.

It belongs to the amino acid-polyamine-organocation (APC) superfamily. Basic amino acid/polyamine antiporter (APA) (TC 2.A.3.2) family.

The protein localises to the cell inner membrane. In terms of biological role, catalyzes the exchange of L-arginine for agmatine. The arginine uptake by the bacterium in the macrophage may be a virulence factor against the host innate immune response. This is Arginine/agmatine antiporter (aaxC) from Chlamydia abortus (strain DSM 27085 / S26/3) (Chlamydophila abortus).